A 380-amino-acid polypeptide reads, in one-letter code: 4-hydroxy-3-methylbut-2-en-1-yl diphosphate synthase (flavodoxin) (380 aa).

[4Fe-4S] cluster-binding residues include Cys-275, Cys-278, Cys-310, and Glu-317.

This sequence belongs to the IspG family. [4Fe-4S] cluster is required as a cofactor.

It catalyses the reaction (2E)-4-hydroxy-3-methylbut-2-enyl diphosphate + oxidized [flavodoxin] + H2O + 2 H(+) = 2-C-methyl-D-erythritol 2,4-cyclic diphosphate + reduced [flavodoxin]. It participates in isoprenoid biosynthesis; isopentenyl diphosphate biosynthesis via DXP pathway; isopentenyl diphosphate from 1-deoxy-D-xylulose 5-phosphate: step 5/6. Functionally, converts 2C-methyl-D-erythritol 2,4-cyclodiphosphate (ME-2,4cPP) into 1-hydroxy-2-methyl-2-(E)-butenyl 4-diphosphate. The chain is 4-hydroxy-3-methylbut-2-en-1-yl diphosphate synthase (flavodoxin) from Hyphomonas neptunium (strain ATCC 15444).